The sequence spans 314 residues: ATP synthase gamma chain (314 aa).

Belongs to the ATPase gamma chain family. F-type ATPases have 2 components, CF(1) - the catalytic core - and CF(0) - the membrane proton channel. CF(1) has five subunits: alpha(3), beta(3), gamma(1), delta(1), epsilon(1). CF(0) has three main subunits: a, b and c.

It localises to the cell membrane. In terms of biological role, produces ATP from ADP in the presence of a proton gradient across the membrane. The gamma chain is believed to be important in regulating ATPase activity and the flow of protons through the CF(0) complex. The chain is ATP synthase gamma chain from Lactiplantibacillus plantarum (strain ATCC BAA-793 / NCIMB 8826 / WCFS1) (Lactobacillus plantarum).